A 96-amino-acid chain; its full sequence is Small ribosomal subunit protein uS19 (96 aa).

Belongs to the universal ribosomal protein uS19 family.

Protein S19 forms a complex with S13 that binds strongly to the 16S ribosomal RNA. This is Small ribosomal subunit protein uS19 from Gemmatimonas aurantiaca (strain DSM 14586 / JCM 11422 / NBRC 100505 / T-27).